The primary structure comprises 245 residues: tRNA1(Val) (adenine(37)-N6)-methyltransferase (245 aa).

It belongs to the methyltransferase superfamily. tRNA (adenine-N(6)-)-methyltransferase family.

Its subcellular location is the cytoplasm. It carries out the reaction adenosine(37) in tRNA1(Val) + S-adenosyl-L-methionine = N(6)-methyladenosine(37) in tRNA1(Val) + S-adenosyl-L-homocysteine + H(+). Its function is as follows. Specifically methylates the adenine in position 37 of tRNA(1)(Val) (anticodon cmo5UAC). This is tRNA1(Val) (adenine(37)-N6)-methyltransferase from Escherichia coli (strain UTI89 / UPEC).